The primary structure comprises 83 residues: Conotoxin Pu6.1 (83 aa).

The signal sequence occupies residues 1 to 19 (MKLVLAIVLILMLVSLSTG). The propeptide occupies 20-42 (AEESGQEISMVGPPLYIWDPIPP). 3 cysteine pairs are disulfide-bonded: cysteine 43-cysteine 57, cysteine 50-cysteine 62, and cysteine 56-cysteine 78.

It belongs to the conotoxin I3 superfamily. In terms of tissue distribution, expressed by the venom duct.

It localises to the secreted. This chain is Conotoxin Pu6.1, found in Conus pulicarius (Flea-bitten cone).